The chain runs to 127 residues: Glycine cleavage system H protein (127 aa).

The region spanning 23-105 (KVSVGITDFA…YGEGWIAVIE (83 aa)) is the Lipoyl-binding domain. Residue Lys64 is modified to N6-lipoyllysine.

This sequence belongs to the GcvH family. The glycine cleavage system is composed of four proteins: P, T, L and H. Requires (R)-lipoate as cofactor.

Functionally, the glycine cleavage system catalyzes the degradation of glycine. The H protein shuttles the methylamine group of glycine from the P protein to the T protein. The sequence is that of Glycine cleavage system H protein from Coprothermobacter proteolyticus (strain ATCC 35245 / DSM 5265 / OCM 4 / BT).